We begin with the raw amino-acid sequence, 204 residues long: Protein C (204 aa).

The segment at 1–78 is disordered; that stretch reads MPSFLRGILK…TEQSQRRPKI (78 aa). The span at 10-20 shows a compositional bias: basic and acidic residues; that stretch reads KPKERHHENKN. Residues 25-34 show a composition bias toward low complexity; the sequence is SSDSLTSSYP.

It belongs to the respirovirus protein C family.

This Homo sapiens (Human) protein is Protein C (P/V/C).